The following is a 370-amino-acid chain: 3-dehydroquinate synthase (370 aa).

Residues 108–112 (GVIGD), 132–133 (TT), K145, and K154 contribute to the NAD(+) site. Zn(2+) is bound by residues E187, H249, and H267.

Belongs to the sugar phosphate cyclases superfamily. Dehydroquinate synthase family. It depends on Co(2+) as a cofactor. The cofactor is Zn(2+). NAD(+) is required as a cofactor.

It is found in the cytoplasm. The enzyme catalyses 7-phospho-2-dehydro-3-deoxy-D-arabino-heptonate = 3-dehydroquinate + phosphate. The protein operates within metabolic intermediate biosynthesis; chorismate biosynthesis; chorismate from D-erythrose 4-phosphate and phosphoenolpyruvate: step 2/7. Functionally, catalyzes the conversion of 3-deoxy-D-arabino-heptulosonate 7-phosphate (DAHP) to dehydroquinate (DHQ). The chain is 3-dehydroquinate synthase from Cereibacter sphaeroides (strain ATCC 17029 / ATH 2.4.9) (Rhodobacter sphaeroides).